We begin with the raw amino-acid sequence, 277 residues long: Myelin proteolipid protein (277 aa).

Residues Gly-2 to Cys-10 are Cytoplasmic-facing. 3 S-palmitoyl cysteine lipidation sites follow: Cys-6, Cys-7, and Cys-10. A helical transmembrane segment spans residues Leu-11–Gly-36. At His-37–Glu-59 the chain is on the extracellular side. A helical transmembrane segment spans residues Tyr-60 to Ala-88. The Cytoplasmic portion of the chain corresponds to Glu-89 to Lys-151. S-palmitoyl cysteine attachment occurs at residues Cys-109, Cys-139, and Cys-141. Residues Phe-152–Phe-178 form a helical membrane-spanning segment. The Extracellular segment spans residues Asn-179–His-238. 2 cysteine pairs are disulfide-bonded: Cys-184–Cys-228 and Cys-201–Cys-220. A lipid anchor (O-palmitoyl threonine) is attached at Thr-199. Residues Leu-239–Leu-268 traverse the membrane as a helical segment. At Lys-269 to Phe-277 the chain is on the cytoplasmic side.

Belongs to the myelin proteolipid protein family.

It is found in the cell membrane. This is the major myelin protein from the central nervous system. It plays an important role in the formation or maintenance of the multilamellar structure of myelin. The protein is Myelin proteolipid protein (PLP1) of Gallus gallus (Chicken).